We begin with the raw amino-acid sequence, 267 residues long: tRNA pseudouridine synthase A (267 aa).

Aspartate 51 (nucleophile) is an active-site residue. Residue tyrosine 109 coordinates substrate.

This sequence belongs to the tRNA pseudouridine synthase TruA family. Homodimer.

The catalysed reaction is uridine(38/39/40) in tRNA = pseudouridine(38/39/40) in tRNA. In terms of biological role, formation of pseudouridine at positions 38, 39 and 40 in the anticodon stem and loop of transfer RNAs. This chain is tRNA pseudouridine synthase A, found in Staphylococcus aureus (strain MSSA476).